The sequence spans 207 residues: Ribonuclease HII (207 aa).

Positions 17–207 (RIVAGVDEVG…SFKPLAAFVD (191 aa)) constitute an RNase H type-2 domain. The a divalent metal cation site is built by Asp-23, Glu-24, and Asp-120.

This sequence belongs to the RNase HII family. Requires Mn(2+) as cofactor. The cofactor is Mg(2+).

It localises to the cytoplasm. It carries out the reaction Endonucleolytic cleavage to 5'-phosphomonoester.. In terms of biological role, endonuclease that specifically degrades the RNA of RNA-DNA hybrids. The polypeptide is Ribonuclease HII (Herpetosiphon aurantiacus (strain ATCC 23779 / DSM 785 / 114-95)).